Reading from the N-terminus, the 1042-residue chain is Ubiquitin carboxyl-terminal hydrolase 38 (1042 aa).

Residues 445-949 (TGLINLGNTC…TAYVLLYKKQ (505 aa)) form the USP domain. Cys454 (nucleophile) is an active-site residue. His857 functions as the Proton acceptor in the catalytic mechanism.

The protein belongs to the peptidase C19 family. As to quaternary structure, interacts with isoform 1 of FBXW7; this interaction prevents FBXW7-mediated degradation of MYC. Highly expressed in skeletal muscle. Expressed in adrenal gland.

It localises to the cytoplasm. It is found in the nucleus. It catalyses the reaction Thiol-dependent hydrolysis of ester, thioester, amide, peptide and isopeptide bonds formed by the C-terminal Gly of ubiquitin (a 76-residue protein attached to proteins as an intracellular targeting signal).. Functionally, deubiquitinating enzyme that plays a role in various cellular processes, including DNA repair, cell cycle regulation, and immune response. Plays a role in the inhibition of type I interferon signaling by mediating the 'Lys-33' to 'Lys-48' ubiquitination transition of TBK1 leading to its degradation. Cleaves the ubiquitin chain from the histone demethylase LSD1/KDM1A and prevents it from degradation by the 26S proteasome, thus maintaining LSD1 protein level in cells. Plays a role in the DNA damage response by regulating the deacetylase activity of HDAC1. Mechanistically, removes the 'Lys-63'-linked ubiquitin chain promoting the deacetylase activity of HDAC1 in response to DNA damage. Also acts as a specific deubiquitinase of histone deacetylase 3/HDAC3 and cleaves its 'Lys-63'-linked ubiquitin chains to lower its histone deacetylase activity. Regulates MYC levels and cell proliferation via antagonizing ubiquitin E3 ligase FBXW7 thereby preventing MYC 'Lys-48'-linked ubiquitination and degradation. Participates in antiviral response by removing both 'Lys-48'-linked and 'Lys-63'-linked polyubiquitination of Zika virus envelope protein E. Constitutively associated with IL-33R/IL1RL1, deconjugates its 'Lys-27'-linked polyubiquitination resulting in its autophagic degradation. This chain is Ubiquitin carboxyl-terminal hydrolase 38 (USP38), found in Homo sapiens (Human).